The primary structure comprises 183 residues: Ribulose bisphosphate carboxylase small subunit, chloroplastic 7 (183 aa).

A chloroplast-targeting transit peptide spans 1 to 43 (MAAAMMNKTVVVGKESVKGGVAPKVAMSRGGFLNSGIMKKDRD).

The protein belongs to the RuBisCO small chain family. Heterohexadecamer of 8 large and 8 small subunits.

The protein resides in the plastid. The protein localises to the chloroplast. Functionally, ruBisCO catalyzes two reactions: the carboxylation of D-ribulose 1,5-bisphosphate, the primary event in carbon dioxide fixation, as well as the oxidative fragmentation of the pentose substrate. Both reactions occur simultaneously and in competition at the same active site. Although the small subunit is not catalytic it is essential for maximal activity. The protein is Ribulose bisphosphate carboxylase small subunit, chloroplastic 7 of Acetabularia peniculus (Green alga).